The primary structure comprises 486 residues: Achaete-scute complex protein T8 (486 aa).

2 disordered regions span residues 1 to 26 and 75 to 158; these read MAAL…GIKT and AAST…LPLP. Residues 75 to 86 show a composition bias toward polar residues; sequence AASTTNTTPISS. Positions 159-223 constitute a bHLH domain; that stretch reads QAVARRNARE…RMAVEYIRSL (65 aa).

Efficient DNA binding requires dimerization with another bHLH protein. As to expression, l(1)SC, SC and AC strongly label the presumptive stomatogastric nervous system, while ASE is more prominent in the presumptive procephalic lobe.

Its function is as follows. Involved in the determination of the neuronal precursors of optic lobes in the central nervous system. In Drosophila melanogaster (Fruit fly), this protein is Achaete-scute complex protein T8 (ase).